The sequence spans 323 residues: NADH-ubiquinone oxidoreductase chain 1 (323 aa).

A run of 8 helical transmembrane segments spans residues 8–28 (VINP…LTLL), 74–94 (FLFL…WAPM), 105–125 (LGVL…LGSG), 145–165 (ISYE…TGGF), 176–196 (SIWL…STLA), 236–256 (ILLM…IPAF), 258–278 (ELTA…FLWV), and 298–318 (FLPL…ALAG).

Belongs to the complex I subunit 1 family.

It localises to the mitochondrion inner membrane. It carries out the reaction a ubiquinone + NADH + 5 H(+)(in) = a ubiquinol + NAD(+) + 4 H(+)(out). Its function is as follows. Core subunit of the mitochondrial membrane respiratory chain NADH dehydrogenase (Complex I) that is believed to belong to the minimal assembly required for catalysis. Complex I functions in the transfer of electrons from NADH to the respiratory chain. The immediate electron acceptor for the enzyme is believed to be ubiquinone. This is NADH-ubiquinone oxidoreductase chain 1 (MT-ND1) from Oncorhynchus mykiss (Rainbow trout).